A 1735-amino-acid polypeptide reads, in one-letter code: Cadherin-AgCad1 (1735 aa).

The first 30 residues, 1–30 (MKCVASKFNMWLHLGWLLGLLLVLLPLVRC), serve as a signal peptide directing secretion. Over 31–1574 (QGWGEPRFET…ALTEADETLQ (1544 aa)) the chain is Extracellular. The interval 166–1456 (VTDCLFNVYH…KVYIVSESNR (1291 aa)) is extracellular domain (EC). Cadherin domains follow at residues 171 to 273 (FNVY…PPIF), 280 to 378 (ERIM…IPEI), 379 to 498 (YMKP…VPKF), 499 to 620 (GRDE…PPQI), 621 to 757 (TLPR…APYF), 767 to 866 (SVKE…QPYH), 879 to 983 (EKIP…TPKL), 985 to 1109 (ELAA…TPSI), 1136 to 1235 (GSPL…EPTF), 1255 to 1350 (AEDP…PPVF), and 1351 to 1461 (QQRL…TFVF). Short sequence motifs (toxin-binding receptor motif) lie at residues 1344–1350 (NDNPPVF) and 1446–1456 (AKVYIVSESNR). The tract at residues 1358-1569 (GITTNDRVPK…PLATEALTEA (212 aa)) is CR11-MPED, increases toxicity of activated Cry4B toxin, peptide alone is not toxic. The segment at 1457 to 1569 (VTFVFLNSVE…PLATEALTEA (113 aa)) is membrane-proximal EC domain (MPED). The helical transmembrane segment at 1575 to 1595 (IILIVVSAALAVLCVILFVAF) threads the bilayer. Over 1596–1735 (FIKIRSLNRQ…ETDDELSHRF (140 aa)) the chain is Cytoplasmic. Positions 1701-1719 (SLNPMANGTDKSNDGAPTS) are enriched in polar residues. A disordered region spans residues 1701–1735 (SLNPMANGTDKSNDGAPTSNHKKLDETDDELSHRF). Over residues 1722–1735 (KKLDETDDELSHRF) the composition is skewed to basic and acidic residues.

As to expression, larval midgut (at protein level).

It is found in the apical cell membrane. The protein resides in the cell projection. It localises to the microvillus membrane. Cadherins are calcium-dependent cell adhesion proteins. They preferentially interact with themselves in a homophilic manner in connecting cells. In terms of biological role, (Microbial infection) Binds to and is probably the functional receptor for B.thuringiensis subsp. israelensis (Bti) insecticidal toxin Cry4B. Trichoplusia ni insect cells stably transfected with this protein become suspectible to Cry4B; cells undergo oncosis, they bleb and ruffle after 20-40 minutes, swell after 40-60 minutes and lyse after 90 minutes. Following toxin treatment in the T.in insect system levels of intracellular 3',5'-cyclic AMP (cAMP) rise 12.5-fold; EDTA but not EGTA pretreatment prevents cAMP increase. Inorganic phosphate also rises 3.4-fold after toxin treatment. The polypeptide is Cadherin-AgCad1 (Anopheles gambiae (African malaria mosquito)).